The chain runs to 367 residues: Glutamate 5-kinase (367 aa).

Lys10 lines the ATP pocket. Substrate contacts are provided by Ser50, Asp137, and Asn149. ATP contacts are provided by residues 169–170 (TD) and 211–217 (TGGMSTK). The PUA domain occupies 275–353 (AGEITVDEGA…QEIDAILGYE (79 aa)).

This sequence belongs to the glutamate 5-kinase family.

It localises to the cytoplasm. The catalysed reaction is L-glutamate + ATP = L-glutamyl 5-phosphate + ADP. It participates in amino-acid biosynthesis; L-proline biosynthesis; L-glutamate 5-semialdehyde from L-glutamate: step 1/2. In terms of biological role, catalyzes the transfer of a phosphate group to glutamate to form L-glutamate 5-phosphate. The polypeptide is Glutamate 5-kinase (Escherichia fergusonii (strain ATCC 35469 / DSM 13698 / CCUG 18766 / IAM 14443 / JCM 21226 / LMG 7866 / NBRC 102419 / NCTC 12128 / CDC 0568-73)).